The primary structure comprises 133 residues: DNA-directed RNA polymerase subunit omega (133 aa).

This sequence belongs to the RNA polymerase subunit omega family. As to quaternary structure, the RNAP catalytic core consists of 2 alpha, 1 beta, 1 beta' and 1 omega subunit. When a sigma factor is associated with the core the holoenzyme is formed, which can initiate transcription.

It carries out the reaction RNA(n) + a ribonucleoside 5'-triphosphate = RNA(n+1) + diphosphate. In terms of biological role, promotes RNA polymerase assembly. Latches the N- and C-terminal regions of the beta' subunit thereby facilitating its interaction with the beta and alpha subunits. This chain is DNA-directed RNA polymerase subunit omega, found in Brucella canis (strain ATCC 23365 / NCTC 10854 / RM-666).